The primary structure comprises 498 residues: Hyaluronan-mediated motility receptor (498 aa).

Positions 150–331 (EEMTSERNVF…ITDLQNQLRQ (182 aa)) are required for interaction with FAM83D. N-linked (GlcNAc...) asparagine glycosylation is found at N262 and N302. 2 hyaluronic acid-binding regions span residues 420 to 430 (KQKIKHVVKLK) and 442 to 451 (KLRSQLAKRK). Residue N483 is glycosylated (N-linked (GlcNAc...) asparagine). At T488 the chain carries Phosphothreonine.

As to quaternary structure, interacts with ANKRD26. Interacts with DYNLL1. Interacts with FAM83D/CHICA.

The protein localises to the cell surface. It is found in the cytoplasm. It localises to the cytoskeleton. Its subcellular location is the spindle. In terms of biological role, receptor for hyaluronic acid (HA). Involved in cell motility. When hyaluronan binds to HMMR, the phosphorylation of a number of proteins, including the PTK2/FAK1 occurs. May also be involved in cellular transformation and metastasis formation, and in regulating extracellular-regulated kinase (ERK) activity. May act as a regulator of adipogenisis. This chain is Hyaluronan-mediated motility receptor (Hmmr), found in Rattus norvegicus (Rat).